Here is a 62-residue protein sequence, read N- to C-terminus: Photosystem II reaction center protein Z (62 aa).

2 helical membrane passes run Ala-8 to Ala-28 and Trp-41 to Val-61.

It belongs to the PsbZ family. In terms of assembly, PSII is composed of 1 copy each of membrane proteins PsbA, PsbB, PsbC, PsbD, PsbE, PsbF, PsbH, PsbI, PsbJ, PsbK, PsbL, PsbM, PsbT, PsbX, PsbY, PsbZ, Psb30/Ycf12, peripheral proteins PsbO, CyanoQ (PsbQ), PsbU, PsbV and a large number of cofactors. It forms dimeric complexes.

The protein resides in the cellular thylakoid membrane. May control the interaction of photosystem II (PSII) cores with the light-harvesting antenna, regulates electron flow through the 2 photosystem reaction centers. PSII is a light-driven water plastoquinone oxidoreductase, using light energy to abstract electrons from H(2)O, generating a proton gradient subsequently used for ATP formation. This Trichormus variabilis (strain ATCC 29413 / PCC 7937) (Anabaena variabilis) protein is Photosystem II reaction center protein Z.